Reading from the N-terminus, the 430-residue chain is Hemagglutinin-esterase (430 aa).

A signal peptide spans 1 to 27 (MLRMRVRPPSAIPVFLIFVLLPFVLTS). An esterase domain first part region spans residues 16–133 (LIFVLLPFVL…GSFGWVSNKV (118 aa)). Topologically, residues 28–404 (KPITPHYGPG…ENVDVTSSAY (377 aa)) are virion surface. The active-site Nucleophile is the S49. Cysteines 53 and 69 form a disulfide. N-linked (GlcNAc...) asparagine; by host glycosylation is found at N88, N117, N159, N165, N247, N268, and N289. Disulfide bonds link C120-C168, C207-C284, and C215-C257. The interval 134–274 (GFYSKLYSMA…GVYNATTFGK (141 aa)) is receptor binding. The segment at 275 to 390 (FLIYPTKSYC…SCPQYYKLFE (116 aa)) is esterase domain second part. Cysteines 315 and 320 form a disulfide. N324 carries an N-linked (GlcNAc...) asparagine; by host glycan. Catalysis depends on charge relay system residues D336 and H339. Residue N354 is glycosylated (N-linked (GlcNAc...) asparagine; by host). C357 and C382 are oxidised to a cystine. Residues 405 to 425 (FVATWVLLVLVIILIFILISF) traverse the membrane as a helical segment. Residues 426–430 (CLSSY) lie on the Intravirion side of the membrane.

Belongs to the influenza type C/coronaviruses hemagglutinin-esterase family. N-glycosylated.

The protein resides in the virion membrane. Its subcellular location is the host cell membrane. It catalyses the reaction N-acetyl-9-O-acetylneuraminate + H2O = N-acetylneuraminate + acetate + H(+). The catalysed reaction is N-acetyl-4-O-acetylneuraminate + H2O = N-acetylneuraminate + acetate + H(+). Its function is as follows. Structural protein that makes short spikes at the surface of the virus. Contains receptor binding and receptor-destroying activities. Mediates de-O-acetylation of N-acetyl-9-O-acetylneuraminic acid, which is probably the receptor determinant recognized by the virus on the surface of erythrocytes and susceptible cells. This receptor-destroying activity is important for virus release as it probably helps preventing self-aggregation and ensures the efficient spread of the progeny virus from cell to cell. May serve as a secondary viral attachment protein for initiating infection, the spike protein being the major one. Seems to be a 'luxury' protein that is not absolutely necessary for virus infection in culture. However, its presence in the virus may alter its pathogenicity. May become a target for both the humoral and the cellular branches of the immune system. This is Hemagglutinin-esterase (HE) from Porcine torovirus (strain P10) (PoTV).